The sequence spans 154 residues: UPF0039 protein sll0451 (154 aa).

In terms of domain architecture, N-acetyltransferase spans 8-151; that stretch reads QRFNDISGEA…EHISMIFRVP (144 aa).

This sequence belongs to the UPF0039 (ElaA) family.

This is UPF0039 protein sll0451 from Synechocystis sp. (strain ATCC 27184 / PCC 6803 / Kazusa).